The sequence spans 258 residues: Distal membrane-arm assembly complex protein 2 (258 aa).

The protein belongs to the ATP synthase subunit s family. Interacts with incompletely assembled mitochondrial NADH:ubiquinone oxidoreductase complex (complex I).

The protein localises to the mitochondrion. In terms of biological role, required for the assembly of the mitochondrial NADH:ubiquinone oxidoreductase complex (complex I). Involved in the assembly of the distal region of complex I. In Mus musculus (Mouse), this protein is Distal membrane-arm assembly complex protein 2 (Dmac2).